Here is a 180-residue protein sequence, read N- to C-terminus: Large ribosomal subunit protein uL5 (180 aa).

It belongs to the universal ribosomal protein uL5 family. In terms of assembly, part of the 50S ribosomal subunit; part of the 5S rRNA/L5/L18/L25 subcomplex. Contacts the 5S rRNA and the P site tRNA. Forms a bridge to the 30S subunit in the 70S ribosome.

In terms of biological role, this is one of the proteins that bind and probably mediate the attachment of the 5S RNA into the large ribosomal subunit, where it forms part of the central protuberance. In the 70S ribosome it contacts protein S13 of the 30S subunit (bridge B1b), connecting the 2 subunits; this bridge is implicated in subunit movement. Contacts the P site tRNA; the 5S rRNA and some of its associated proteins might help stabilize positioning of ribosome-bound tRNAs. The polypeptide is Large ribosomal subunit protein uL5 (Cupriavidus metallidurans (strain ATCC 43123 / DSM 2839 / NBRC 102507 / CH34) (Ralstonia metallidurans)).